The primary structure comprises 322 residues: Putative nickel/cobalt efflux system HI_1248 (322 aa).

6 helical membrane passes run 7-27 (GLVL…WFFL), 54-74 (AGTT…LGPG), 100-120 (LSSL…VVVL), 137-157 (TALL…LRAY), 228-248 (IFVL…LAVL), and 294-314 (LIAG…TTIS).

This sequence belongs to the NiCoT transporter (TC 2.A.52) family.

It is found in the cell membrane. Functionally, efflux system for nickel and cobalt. This is Putative nickel/cobalt efflux system HI_1248 from Haemophilus influenzae (strain ATCC 51907 / DSM 11121 / KW20 / Rd).